The chain runs to 86 residues: Omega-theraphotoxin-Hhn1f 4 (86 aa).

Positions 1–21 (MKSIVFVALFGLALLAVVCSA) are cleaved as a signal peptide. Positions 22–50 (SEDAHKELLKEVVRAMVVDKTDAVQAGER) are excised as a propeptide. Intrachain disulfides connect Cys52-Cys66, Cys59-Cys71, and Cys65-Cys78.

It belongs to the neurotoxin 10 (Hwtx-1) family. 17 (Hntx-9) subfamily. As to expression, expressed by the venom gland.

Its subcellular location is the secreted. In terms of biological role, ion channel inhibitor. This Cyriopagopus hainanus (Chinese bird spider) protein is Omega-theraphotoxin-Hhn1f 4.